Reading from the N-terminus, the 169-residue chain is Peptide methionine sulfoxide reductase MsrA (169 aa).

The active site involves Cys10.

This sequence belongs to the MsrA Met sulfoxide reductase family.

It catalyses the reaction L-methionyl-[protein] + [thioredoxin]-disulfide + H2O = L-methionyl-(S)-S-oxide-[protein] + [thioredoxin]-dithiol. The enzyme catalyses [thioredoxin]-disulfide + L-methionine + H2O = L-methionine (S)-S-oxide + [thioredoxin]-dithiol. Has an important function as a repair enzyme for proteins that have been inactivated by oxidation. Catalyzes the reversible oxidation-reduction of methionine sulfoxide in proteins to methionine. This Streptococcus pyogenes serotype M12 (strain MGAS2096) protein is Peptide methionine sulfoxide reductase MsrA.